A 350-amino-acid chain; its full sequence is Protein O-mannose kinase (350 aa).

At Met-1 the chain carries N-acetylmethionine. Residues 1–20 lie on the Cytoplasmic side of the membrane; that stretch reads MEKQPQNKRRGLAPREVPPA. Residues 21 to 43 traverse the membrane as a helical; Signal-anchor for type II membrane protein segment; the sequence is VGLLLIMALMNTLLYLCLDHFFI. Topologically, residues 44-350 are lumenal; sequence APRQSIVDPR…AVMSQAREML (307 aa). Positions 81-350 constitute a Protein kinase domain; sequence VRQLKRVGEG…AVMSQAREML (270 aa). Asn-165, Asn-220, and Asn-235 each carry an N-linked (GlcNAc...) asparagine glycan.

The protein belongs to the protein kinase superfamily. Ser/Thr protein kinase family. STKL subfamily.

It localises to the endoplasmic reticulum membrane. The catalysed reaction is 3-O-[beta-D-GalNAc-(1-&gt;3)-beta-D-GlcNAc-(1-&gt;4)-alpha-D-Man]-L-Thr-[protein] + ATP = 3-O-[beta-D-GalNAc-(1-&gt;3)-beta-D-GlcNAc-(1-&gt;4)-(O-6-P-alpha-D-Man)]-Thr-[protein] + ADP + H(+). Functionally, protein O-mannose kinase that specifically mediates phosphorylation at the 6-position of an O-mannose of the trisaccharide (N-acetylgalactosamine (GalNAc)-beta-1,3-N-acetylglucosamine (GlcNAc)-beta-1,4-mannose) to generate phosphorylated O-mannosyl trisaccharide (N-acetylgalactosamine-beta-1,3-N-acetylglucosamine-beta-1,4-(phosphate-6-)mannose). Phosphorylated O-mannosyl trisaccharide is a carbohydrate structure present in alpha-dystroglycan (DAG1), which is required for binding laminin G-like domain-containing extracellular proteins with high affinity. Only shows kinase activity when the GalNAc-beta-3-GlcNAc-beta-terminus is linked to the 4-position of O-mannose, suggesting that this disaccharide serves as the substrate recognition motif. The chain is Protein O-mannose kinase (POMK) from Macaca fascicularis (Crab-eating macaque).